A 492-amino-acid chain; its full sequence is Transcription factor IIIB 60 kDa subunit (492 aa).

The TFIIB-type zinc-finger motif lies at 1–30; sequence MGCPNCGSTTFESDTASGNTYCTQCGVVVE. Residues Cys-3, Cys-6, Cys-22, and Cys-25 each contribute to the Zn(2+) site. The interval 440-468 is disordered; it reads QPRKRRRYRPRDSTSDGIADTAAESAKEM.

It belongs to the TFIIB family. As to quaternary structure, TFIIIB comprises the TATA-binding protein (TBP), the B-related factor (BRF) and a third subunit (Potential). Interacts with maf1.

It localises to the nucleus. General activator of RNA polymerase III transcription. The polypeptide is Transcription factor IIIB 60 kDa subunit (brf1) (Schizosaccharomyces pombe (strain 972 / ATCC 24843) (Fission yeast)).